Consider the following 2496-residue polypeptide: Non-reducing polyketide synthase adrD (2496 aa).

The N-terminal acylcarrier protein transacylase domain (SAT) stretch occupies residues 15–254 (LVFGPQIAEI…HHASHITAVQ (240 aa)). The Ketosynthase family 3 (KS3) domain maps to 387–808 (ATPIAITGMG…GSNAALVVKQ (422 aa)). Residues Cys-552, His-687, and His-726 each act as for beta-ketoacyl synthase activity in the active site. The segment at 914–1223 (LCFGGQNGNE…QSLDLGGPQG (310 aa)) is malonyl-CoA:ACP transacylase (MAT) domain. Catalysis depends on Ser-1001, which acts as the For acyl/malonyl transferase activity. Residues 1295–1423 (KEFVQLLTKQ…GEISLHPFGQ (129 aa)) form an N-terminal hotdog fold region. The region spanning 1295–1602 (KEFVQLLTKQ…FTSVSIAGLA (308 aa)) is the PKS/mFAS DH domain. The interval 1296–1601 (EFVQLLTKQP…EFTSVSIAGL (306 aa)) is product template (PT) domain. His-1326 serves as the catalytic Proton acceptor; for dehydratase activity. A C-terminal hotdog fold region spans residues 1451-1602 (ESSGLKGFAV…FTSVSIAGLA (152 aa)). The active-site Proton donor; for dehydratase activity is the Asp-1509. A compositionally biased stretch (basic and acidic residues) spans 1615–1629 (EKASPDLSLRNDSKV). The interval 1615-1645 (EKASPDLSLRNDSKVDVNPTPQNTAPVVQPT) is disordered. Residues 1633 to 1645 (PTPQNTAPVVQPT) are compositionally biased toward polar residues. The region spanning 1652 to 1726 (PGYFVVVQEM…ALVQTIFPDA (75 aa)) is the Carrier domain. Ser-1686 carries the O-(pantetheine 4'-phosphoryl)serine modification. The methyltransferase (CMeT) domain stretch occupies residues 1888-2121 (QHRSEHHLLK…GFQWVDWTHN (234 aa)). The thioesterase (TE) domain stretch occupies residues 2151–2496 (RVMNEETVPY…YEFLRDHVRY (346 aa)). Active-site for thioesterase activity residues include Ser-2274 and Asp-2433.

The catalysed reaction is 3 malonyl-CoA + acetyl-CoA + 2 S-adenosyl-L-methionine = 3,5-dimethylorsellinate + 2 S-adenosyl-L-homocysteine + 3 CO2 + 4 CoA. The protein operates within secondary metabolite biosynthesis; terpenoid biosynthesis. Non-reducing polyketide synthase; part of the gene cluster that mediates the biosynthesis of andrastins, meroterpenoid compounds that exhibit inhibitory activity against ras farnesyltransferase, suggesting that they could be promising leads for antitumor agents. The first step of the pathway is the synthesis of 3,5-dimethylorsellinic acid (DMOA) by the polyketide synthase adrD via condensation of one acetyl-CoA starter unit with 3 malonyl-CoA units and 2 methylations. DMAO is then converted to farnesyl-DMAO by the prenyltransferase adrG. The methyltransferase adrK catalyzes the methylation of the carboxyl group of farnesyl-DMAO to farnesyl-DMAO methyl ester which is further converted to epoxyfarnesyl-DMAO methyl ester by the FAD-dependent monooxygenase adrH. The terpene cyclase adrI then catalyzes the carbon skeletal rearrangement to generate the andrastin E, the first compound in the pathway having the andrastin scaffold, with the tetracyclic ring system. The post-cyclization tailoring enzymes adrF, adrE, adrJ, and adrA, are involved in the conversion of andrastin E into andrastin A. The short chain dehydrogenase adrF is responsible for the oxidation of the C-3 a hydroxyl group of andrastin E to yield the corresponding ketone, andrastin D. The ketoreductase adrE stereoselectively reduces the carbonyl moiety to reverse the stereochemistry of the C-3 position to yield andrastin F. The acetyltransferase adrJ is the acetyltransferase that attaches the acetyl group to the C-3 hydroxyl group of andrastin F to yield andrastin C. Finally, the cytochrome P450 monooxygenase adrA catalyzes two sequential oxidation reactions of the C-23 methyl group, to generate the corresponding alcohol andrastin B, and aldehyde andrastin A. The sequence is that of Non-reducing polyketide synthase adrD from Penicillium rubens (strain ATCC 28089 / DSM 1075 / NRRL 1951 / Wisconsin 54-1255) (Penicillium chrysogenum).